The chain runs to 181 residues: ATP-dependent protease subunit HslV (181 aa).

Thr-11 is an active-site residue. Residues Ala-166, Cys-169, and Thr-172 each coordinate Na(+).

It belongs to the peptidase T1B family. HslV subfamily. As to quaternary structure, a double ring-shaped homohexamer of HslV is capped on each side by a ring-shaped HslU homohexamer. The assembly of the HslU/HslV complex is dependent on binding of ATP.

It localises to the cytoplasm. It carries out the reaction ATP-dependent cleavage of peptide bonds with broad specificity.. With respect to regulation, allosterically activated by HslU binding. Its function is as follows. Protease subunit of a proteasome-like degradation complex believed to be a general protein degrading machinery. The polypeptide is ATP-dependent protease subunit HslV (Chlorobaculum parvum (strain DSM 263 / NCIMB 8327) (Chlorobium vibrioforme subsp. thiosulfatophilum)).